Reading from the N-terminus, the 117-residue chain is Carboxysome shell protein CcmK4 (117 aa).

Residues 5-91 (AVGSLETKGF…PHENVECVLP (87 aa)) enclose the BMC domain.

The protein belongs to the bacterial microcompartments protein family. CcmK subfamily. Crystallizes as a homohexamer. Interacts stably with CcmK3, forming heterohexamers that can make dodecamers. Heterohexamers have a 1:2 CcmK3:CcmK4 stoichiometry. Upon expression in E.coli forms large aggregates.

The protein resides in the carboxysome. Functionally, a probably essential, minor shell protein of the carboxysome, a polyhedral inclusion where RuBisCO (ribulose bisphosphate carboxylase, rbcL-rbcS) is sequestered. Hexamers form sheets that form the facets of the polyhedral carboxysome. In PCC 7418 there are several CcmK paralogs with presumably functional differences. This subunit can probably make both homohexamers and heterohexamers with CcmK3. Both hexamers can also make dodecamers, formation depends on buffer conditions. The chain is Carboxysome shell protein CcmK4 from Halothece sp. (strain PCC 7418) (Synechococcus sp. (strain PCC 7418)).